A 298-amino-acid polypeptide reads, in one-letter code: 4-hydroxy-tetrahydrodipicolinate synthase (298 aa).

A pyruvate-binding site is contributed by T51. Y139 serves as the catalytic Proton donor/acceptor. Residue K167 is the Schiff-base intermediate with substrate of the active site. I209 lines the pyruvate pocket.

Belongs to the DapA family. As to quaternary structure, homotetramer; dimer of dimers.

The protein localises to the cytoplasm. The enzyme catalyses L-aspartate 4-semialdehyde + pyruvate = (2S,4S)-4-hydroxy-2,3,4,5-tetrahydrodipicolinate + H2O + H(+). The protein operates within amino-acid biosynthesis; L-lysine biosynthesis via DAP pathway; (S)-tetrahydrodipicolinate from L-aspartate: step 3/4. Functionally, catalyzes the condensation of (S)-aspartate-beta-semialdehyde [(S)-ASA] and pyruvate to 4-hydroxy-tetrahydrodipicolinate (HTPA). In Haemophilus influenzae (strain ATCC 51907 / DSM 11121 / KW20 / Rd), this protein is 4-hydroxy-tetrahydrodipicolinate synthase.